The sequence spans 109 residues: Short-chain dehydrogenase/reductase homolog YusS (109 aa).

It belongs to the short-chain dehydrogenases/reductases (SDR) family.

This chain is Short-chain dehydrogenase/reductase homolog YusS (yusS), found in Bacillus subtilis (strain 168).